Reading from the N-terminus, the 754-residue chain is 5-methyltetrahydropteroyltriglutamate--homocysteine methyltransferase (754 aa).

5-methyltetrahydropteroyltri-L-glutamate contacts are provided by residues 17–20 (RELK) and Lys117. Residues 431 to 433 (IGS) and Glu484 contribute to the L-homocysteine site. Residues 431-433 (IGS) and Glu484 contribute to the L-methionine site. Residues 515–516 (RC) and Trp561 each bind 5-methyltetrahydropteroyltri-L-glutamate. Residue Asp599 participates in L-homocysteine binding. Residue Asp599 coordinates L-methionine. Glu605 is a binding site for 5-methyltetrahydropteroyltri-L-glutamate. Residues His641, Cys643, and Glu665 each contribute to the Zn(2+) site. His694 (proton donor) is an active-site residue. Cys726 serves as a coordination point for Zn(2+).

The protein belongs to the vitamin-B12 independent methionine synthase family. Zn(2+) serves as cofactor.

It catalyses the reaction 5-methyltetrahydropteroyltri-L-glutamate + L-homocysteine = tetrahydropteroyltri-L-glutamate + L-methionine. Its pathway is amino-acid biosynthesis; L-methionine biosynthesis via de novo pathway; L-methionine from L-homocysteine (MetE route): step 1/1. Its function is as follows. Catalyzes the transfer of a methyl group from 5-methyltetrahydrofolate to homocysteine resulting in methionine formation. In Salmonella paratyphi B (strain ATCC BAA-1250 / SPB7), this protein is 5-methyltetrahydropteroyltriglutamate--homocysteine methyltransferase.